We begin with the raw amino-acid sequence, 145 residues long: Large ribosomal subunit protein uL15 (145 aa).

2 stretches are compositionally biased toward basic residues: residues 1–13 and 19–29; these read MVRE…RGGH and KAGRGKGKKGG. The disordered stretch occupies residues 1-33; that stretch reads MVRERTKKLRGGHYGRGMKAGRGKGKKGGRGNA.

The protein belongs to the universal ribosomal protein uL15 family. As to quaternary structure, part of the 50S ribosomal subunit.

Binds to the 23S rRNA. This chain is Large ribosomal subunit protein uL15, found in Thermoplasma volcanium (strain ATCC 51530 / DSM 4299 / JCM 9571 / NBRC 15438 / GSS1).